The sequence spans 318 residues: uncharacterized protein (318 aa).

Positions 67-157 (LAFDELEKEK…SLKAIQTSQE (91 aa)) form a coiled coil. Residues 172–318 (ESTNKVEKNA…KGFFARLFNL (147 aa)) are disordered. Composition is skewed to basic and acidic residues over residues 175–193 (NKVEKNAVTEDKADSKDSK) and 219–236 (KVDKEDQISATEAIEKAS). The span at 237-248 (VEQSKNGNAAET) shows a compositional bias: polar residues. Composition is skewed to basic and acidic residues over residues 249–274 (SNKEATIDAEAQHDAEQQVAEAHAEA) and 300–310 (SEPKPQEEKKG).

This is an uncharacterized protein from Staphylococcus aureus (strain MW2).